A 335-amino-acid polypeptide reads, in one-letter code: Ferredoxin--NADP reductase (335 aa).

7 residues coordinate FAD: Asp34, Gln42, Tyr47, Ala87, Phe121, Asp287, and Thr328.

It belongs to the ferredoxin--NADP reductase type 2 family. In terms of assembly, homodimer. Requires FAD as cofactor.

It carries out the reaction 2 reduced [2Fe-2S]-[ferredoxin] + NADP(+) + H(+) = 2 oxidized [2Fe-2S]-[ferredoxin] + NADPH. This chain is Ferredoxin--NADP reductase, found in Rickettsia felis (strain ATCC VR-1525 / URRWXCal2) (Rickettsia azadi).